A 435-amino-acid chain; its full sequence is Glutamyl-tRNA reductase (435 aa).

Substrate contacts are provided by residues 49–52 (TCNR), Ser109, 114–116 (ETQ), and Gln120. Cys50 functions as the Nucleophile in the catalytic mechanism. 189–194 (GAGEMS) lines the NADP(+) pocket.

Belongs to the glutamyl-tRNA reductase family. In terms of assembly, homodimer.

It catalyses the reaction (S)-4-amino-5-oxopentanoate + tRNA(Glu) + NADP(+) = L-glutamyl-tRNA(Glu) + NADPH + H(+). Its pathway is porphyrin-containing compound metabolism; protoporphyrin-IX biosynthesis; 5-aminolevulinate from L-glutamyl-tRNA(Glu): step 1/2. Catalyzes the NADPH-dependent reduction of glutamyl-tRNA(Glu) to glutamate 1-semialdehyde (GSA). This Listeria monocytogenes serotype 4b (strain CLIP80459) protein is Glutamyl-tRNA reductase.